The sequence spans 322 residues: Lipoyl synthase (322 aa).

Polar residues predominate over residues 1–12 (MVTVLNTVNQSG). A disordered region spans residues 1–22 (MVTVLNTVNQSGRLRHPEKAHR). Residues Cys-60, Cys-65, Cys-71, Cys-86, Cys-90, Cys-93, and Ser-299 each coordinate [4Fe-4S] cluster. The 217-residue stretch at 72 to 288 (WEKKHATFMI…ETIGKTKGFL (217 aa)) folds into the Radical SAM core domain.

This sequence belongs to the radical SAM superfamily. Lipoyl synthase family. [4Fe-4S] cluster is required as a cofactor.

The protein localises to the cytoplasm. It catalyses the reaction [[Fe-S] cluster scaffold protein carrying a second [4Fe-4S](2+) cluster] + N(6)-octanoyl-L-lysyl-[protein] + 2 oxidized [2Fe-2S]-[ferredoxin] + 2 S-adenosyl-L-methionine + 4 H(+) = [[Fe-S] cluster scaffold protein] + N(6)-[(R)-dihydrolipoyl]-L-lysyl-[protein] + 4 Fe(3+) + 2 hydrogen sulfide + 2 5'-deoxyadenosine + 2 L-methionine + 2 reduced [2Fe-2S]-[ferredoxin]. The protein operates within protein modification; protein lipoylation via endogenous pathway; protein N(6)-(lipoyl)lysine from octanoyl-[acyl-carrier-protein]: step 2/2. In terms of biological role, catalyzes the radical-mediated insertion of two sulfur atoms into the C-6 and C-8 positions of the octanoyl moiety bound to the lipoyl domains of lipoate-dependent enzymes, thereby converting the octanoylated domains into lipoylated derivatives. This Brucella abortus (strain S19) protein is Lipoyl synthase.